The primary structure comprises 246 residues: Isoprenyl transferase 1 (246 aa).

Residue D19 is part of the active site. D19 lines the Mg(2+) pocket. Substrate is bound by residues 20-23 (GNGR), W24, R32, H36, and 64-66 (STD). Catalysis depends on N67, which acts as the Proton acceptor. Substrate-binding positions include W68, R70, R180, and 186–188 (RLS). E199 lines the Mg(2+) pocket.

The protein belongs to the UPP synthase family. In terms of assembly, homodimer. It depends on Mg(2+) as a cofactor.

Its function is as follows. Catalyzes the condensation of isopentenyl diphosphate (IPP) with allylic pyrophosphates generating different type of terpenoids. The sequence is that of Isoprenyl transferase 1 from Bradyrhizobium diazoefficiens (strain JCM 10833 / BCRC 13528 / IAM 13628 / NBRC 14792 / USDA 110).